Consider the following 43-residue polypeptide: Protein PsbN (43 aa).

Residues 7 to 27 traverse the membrane as a helical segment; that stretch reads VAIFISCLLVSFTGYALYTAF.

Belongs to the PsbN family.

It is found in the plastid. The protein localises to the chloroplast thylakoid membrane. In terms of biological role, may play a role in photosystem I and II biogenesis. In Zygnema circumcarinatum (Green alga), this protein is Protein PsbN.